The chain runs to 303 residues: GTP cyclohydrolase FolE2 (303 aa).

It belongs to the GTP cyclohydrolase IV family.

The catalysed reaction is GTP + H2O = 7,8-dihydroneopterin 3'-triphosphate + formate + H(+). It participates in cofactor biosynthesis; 7,8-dihydroneopterin triphosphate biosynthesis; 7,8-dihydroneopterin triphosphate from GTP: step 1/1. Functionally, converts GTP to 7,8-dihydroneopterin triphosphate. The chain is GTP cyclohydrolase FolE2 from Exiguobacterium sp. (strain ATCC BAA-1283 / AT1b).